Consider the following 398-residue polypeptide: Selenide, water dikinase (398 aa).

The segment at 1–21 (MSHKRPQSSAGESNGAVDLKT) is disordered. The active site involves Cys46. ATP is bound by residues Lys49, 72-74 (GMD), Asp97, Asp120, and 171-174 (GGQT). Residue Asp74 participates in Mg(2+) binding. Asp120 is a Mg(2+) binding site. Asp278 contributes to the Mg(2+) binding site.

The protein belongs to the selenophosphate synthase 1 family. Class I subfamily. In terms of assembly, homodimer. Requires Mg(2+) as cofactor.

It carries out the reaction hydrogenselenide + ATP + H2O = selenophosphate + AMP + phosphate + 2 H(+). In terms of biological role, synthesizes selenophosphate from selenide and ATP. In Leishmania major, this protein is Selenide, water dikinase.